We begin with the raw amino-acid sequence, 31 residues long: Cytochrome b6-f complex subunit 6 (31 aa).

The helical transmembrane segment at 4–24 (ITSYFGFLLVVLTITSALFIG) threads the bilayer.

This sequence belongs to the PetL family. As to quaternary structure, the 4 large subunits of the cytochrome b6-f complex are cytochrome b6, subunit IV (17 kDa polypeptide, PetD), cytochrome f and the Rieske protein, while the 4 small subunits are PetG, PetL, PetM and PetN. The complex functions as a dimer.

Its subcellular location is the plastid. The protein resides in the chloroplast thylakoid membrane. In terms of biological role, component of the cytochrome b6-f complex, which mediates electron transfer between photosystem II (PSII) and photosystem I (PSI), cyclic electron flow around PSI, and state transitions. PetL is important for photoautotrophic growth as well as for electron transfer efficiency and stability of the cytochrome b6-f complex. The polypeptide is Cytochrome b6-f complex subunit 6 (Jasminum nudiflorum (Winter jasmine)).